A 2892-amino-acid chain; its full sequence is E3 ubiquitin-protein ligase lubel (2892 aa).

Disordered stretches follow at residues 23 to 55 (DRIG…KSTP), 125 to 252 (KQHM…QLEK), 395 to 423 (SQQH…QFGS), 483 to 631 (PSAA…ESEG), 644 to 672 (QKLQ…ENTQ), 685 to 737 (AHEE…PDHE), 757 to 865 (CCKT…DNSL), and 949 to 975 (DRFT…QQES). Positions 40–52 (GLPKAPALPPKAK) are enriched in low complexity. Gly residues predominate over residues 189–198 (GWRGSLGGGA). Positions 206 to 215 (ATSSANQMNN) are enriched in polar residues. Low complexity-rich tracts occupy residues 402-412 (AQHPHQALPQH) and 483-503 (PSAA…TPSR). Positions 516-528 (VDDELTDDEDSDQ) are enriched in acidic residues. Over residues 535–546 (VSNRSGMTSASR) the composition is skewed to polar residues. The segment covering 547–560 (SQHHQNHIQPRQRR) has biased composition (basic residues). Residues 606–623 (GTLTRNKTATDSARTSRI) are compositionally biased toward polar residues. Basic and acidic residues predominate over residues 647 to 670 (QEADQHKSSKKAEPKRKPEMKDEN). Over residues 801–813 (KPTTKSQQPSQKS) the composition is skewed to polar residues. 2 stretches are compositionally biased toward low complexity: residues 818-837 (SKTT…AVNS) and 846-856 (KTPSKSTLKTS). Residues 1042-1187 (MHIILKELEL…LMRIWGSPNG (146 aa)) form the UBA-like 1 domain. Disordered regions lie at residues 1214–1252 (LQPP…SPYQ), 1477–1520 (LPTA…KLET), 1557–1653 (AEVQ…KILS), 1717–2019 (STTI…NLSE), 2032–2082 (RDEI…EGNT), 2191–2316 (SAPP…PLRS), and 2411–2431 (DYET…EPQK). Residues 1241–1252 (VKSTYATPSPYQ) show a composition bias toward polar residues. Residues 1510–1519 (EELRQQEKLE) show a composition bias toward basic and acidic residues. Residues 1560 to 1571 (QVQSDDQPSTSR) show a composition bias toward polar residues. The segment covering 1576 to 1587 (RAKRSQQSRKGR) has biased composition (basic residues). The segment covering 1595 to 1607 (PTNRTKLPNNIDQ) has biased composition (polar residues). Basic and acidic residues predominate over residues 1608–1627 (KVNESKTAAKETEAVKDKDL). 3 stretches are compositionally biased toward polar residues: residues 1630–1653 (AASN…KILS), 1717–1726 (STTISEQSEG), and 1764–1779 (KSPT…TSHI). A compositionally biased stretch (low complexity) spans 1822-1834 (LSSSSLRSESRSS). Residues 1859-1881 (TVSSPKSEQLSDNQEVNLVSQET) are compositionally biased toward polar residues. The segment covering 1918-1927 (DSDEVFEDAP) has biased composition (acidic residues). A compositionally biased stretch (basic and acidic residues) spans 1953–1963 (DGQRAETKSPE). Acidic residues-rich tracts occupy residues 1964-1975 (DEVVILLDEESQ) and 2036-2079 (SMDE…DGEE). Low complexity-rich tracts occupy residues 2214–2230 (PSEV…ALPI) and 2269–2291 (SGTA…TVSK). Residues 2297–2308 (NEPTNKSNSTPL) are compositionally biased toward polar residues. Positions 2411-2425 (DYETSATEEEQEEPN) are enriched in acidic residues. One can recognise a UBA-like 2 domain in the interval 2457 to 2513 (DPAILARKYVDQELVTNIAEAQIAATLVSMKFSEDVALWAARECSDLDQAIAMLQQE). The TRIAD supradomain stretch occupies residues 2510–2748 (LQQECELCMN…LGLHAHHPRN (239 aa)). Zn(2+) contacts are provided by Cys2514, Cys2517, Cys2537, Cys2540, Cys2618, Cys2621, Cys2636, Cys2639, Cys2644, Cys2647, His2655, Cys2660, Cys2690, and Cys2693. Residues 2514-2564 (CELCMNSYPMNQMVSMLKCLHKCCKQCAKSYFTVQITDRSINDCSCPFCKL) form an RING-type 1 zinc finger. The tract at residues 2514–2892 (CELCMNSYPM…IKKHIPLKSA (379 aa)) is necessary for linear polyubiquitination and sufficent for inducing DptA in the intestine. The IBR-type zinc-finger motif lies at 2601–2660 (QRKLRDRSLLQDPNFKWCIQCSSGFFARPKQKRLICPDCGSVTCAQCRKPWERQHEGSSC). The RING-type 2; atypical zinc-finger motif lies at 2690 to 2720 (CPKCKFRYSLARGGCMHFTCTQCKFEFCYGC). Cys2704 is an active-site residue. Cys2709 and Cys2712 together coordinate Zn(2+).

The protein belongs to the RBR family.

The catalysed reaction is [E2 ubiquitin-conjugating enzyme]-S-ubiquitinyl-L-cysteine + [acceptor protein]-L-lysine = [E2 ubiquitin-conjugating enzyme]-L-cysteine + [acceptor protein]-N(6)-ubiquitinyl-L-lysine.. Functionally, E3 ubiquitin-protein ligase which conjugates linear 'Met-1'- and 'Lys-63'-linked polyubiquitin chains to substrates and plays a crucial role in the NF-kappa-B intestinal inflammatory response to oral infection and in the heat stress response. Preferentially interacts with 'Lys-63'-linked, and to a lesser extent 'Lys-48'-linked, polyubiquitin chains. Upon oral infection with a Gram-negative bacterium E.carotovora subsp. carotovora 15, functions with the E2 ubiquitin-conjugating enzyme Ubc10 to mediate the conjugation of 'Lys-63'- and linear 'Met-1'-linked polyubiquitin chains to the substrate key which is essential for activation of the NF-kappa-B signaling cascade in the adult intestinal epithelium. It is not required for systemic immune response to septic infection with either E.carotovora subsp. carotovora 15 or Gram-positive M.luteus bacteria. Function in controlling linear ubiquitination is also essential for regulating the heat stress response in adults. This function may require the E2 ubiquitin-conjugating enzymes Ubc10 or eff. This Drosophila melanogaster (Fruit fly) protein is E3 ubiquitin-protein ligase lubel.